A 92-amino-acid polypeptide reads, in one-letter code: Small ribosomal subunit protein uS19c (92 aa).

This sequence belongs to the universal ribosomal protein uS19 family.

Its subcellular location is the plastid. The protein resides in the chloroplast. Protein S19 forms a complex with S13 that binds strongly to the 16S ribosomal RNA. The chain is Small ribosomal subunit protein uS19c from Amborella trichopoda.